The sequence spans 289 residues: ATP synthase subunit a (289 aa).

6 helical membrane passes run 43 to 63 (AFHL…VLIF), 104 to 124 (IAPL…VDLI), 160 to 180 (LSVF…GGFI), 193 to 213 (IFVQ…TLIA), 232 to 252 (VFIL…GLGV), and 259 to 279 (AVFH…LTIV).

It belongs to the ATPase A chain family. In terms of assembly, F-type ATPases have 2 components, CF(1) - the catalytic core - and CF(0) - the membrane proton channel. CF(1) has five subunits: alpha(3), beta(3), gamma(1), delta(1), epsilon(1). CF(0) has three main subunits: a(1), b(2) and c(9-12). The alpha and beta chains form an alternating ring which encloses part of the gamma chain. CF(1) is attached to CF(0) by a central stalk formed by the gamma and epsilon chains, while a peripheral stalk is formed by the delta and b chains.

Its subcellular location is the cell inner membrane. Key component of the proton channel; it plays a direct role in the translocation of protons across the membrane. The chain is ATP synthase subunit a from Pseudomonas fluorescens (strain SBW25).